A 49-amino-acid chain; its full sequence is Astexin-3 (49 aa).

Residues 1 to 25 constitute a propeptide that is removed on maturation; sequence MRTYNRSLPARAGLTDLGKVTTHTK. Residues 26–34 constitute a cross-link (isoaspartyl glycine isopeptide (Gly-Asp)); it reads GPTPMVGLD.

This lasso peptide is hydrolyzed to a linear form by the isopeptidase AtxE2, in vitro. The isopeptidase AtxE2 only recognizes the threaded form (but not the unthreaded form).

The protein resides in the cytoplasm. The protein localises to the secreted. Functionally, shows weak antimicrobial activity against its phylogenetic relative Caulobacter crescentus. Does not show activity against other bacteria tested (E.coli, Vibrio sp, Burkhoderia thailandensis, and Salmonella newport). This Asticcacaulis excentricus (strain ATCC 15261 / DSM 4724 / KCTC 12464 / NCIMB 9791 / VKM B-1370 / CB 48) protein is Astexin-3.